The sequence spans 538 residues: indole-2-monooxygenase (538 aa).

The chain crosses the membrane as a helical span at residues 22–42 (ALLLAIPFSLLLLPLLLRYLA). Residue C481 coordinates heme.

It belongs to the cytochrome P450 family. Heme is required as a cofactor.

Its subcellular location is the membrane. The catalysed reaction is indole + reduced [NADPH--hemoprotein reductase] + O2 = indolin-2-one + oxidized [NADPH--hemoprotein reductase] + H2O + H(+). It functions in the pathway secondary metabolite biosynthesis; 2,4-dihydroxy-1,4-benzoxazin-3-one biosynthesis; 2,4-dihydroxy-1,4-benzoxazin-3-one from indoleglycerol phosphate: step 2/5. In terms of biological role, catalyzes the conversion of indole to indolin-2-one. This Zea mays (Maize) protein is indole-2-monooxygenase (CYP71C4).